The chain runs to 61 residues: Small ribosomal subunit protein uS14 (61 aa).

Zn(2+) contacts are provided by Cys24, Cys27, Cys40, and Cys43.

Belongs to the universal ribosomal protein uS14 family. Zinc-binding uS14 subfamily. In terms of assembly, part of the 30S ribosomal subunit. Contacts proteins S3 and S10. Requires Zn(2+) as cofactor.

In terms of biological role, binds 16S rRNA, required for the assembly of 30S particles and may also be responsible for determining the conformation of the 16S rRNA at the A site. This is Small ribosomal subunit protein uS14 from Ruminiclostridium cellulolyticum (strain ATCC 35319 / DSM 5812 / JCM 6584 / H10) (Clostridium cellulolyticum).